We begin with the raw amino-acid sequence, 650 residues long: Vitrin (650 aa).

A signal peptide spans M1–S26. Residues T40 to F133 enclose the LCCL domain. Intrachain disulfides connect C46-C62 and C66-C86. Positions R198–E226 are disordered. 2 VWFA domains span residues D265–V450 and D467–I640. N492 carries an N-linked (GlcNAc...) asparagine glycan.

Binds dermatan sulfate and chondroitin sulfate.

The protein localises to the secreted. The protein resides in the extracellular space. It localises to the extracellular matrix. Promotes matrix assembly and cell adhesiveness. Plays a role in spinal cord formation by regulating the proliferation and differentiation of neural stem cells. The polypeptide is Vitrin (Vit) (Mus musculus (Mouse)).